We begin with the raw amino-acid sequence, 194 residues long: uncharacterized protein (194 aa).

The interval 45 to 138 (QLLGVPEQHR…AGPPRGDWGV (94 aa)) is disordered. Ser-69 and Ser-76 each carry phosphoserine. Pro residues predominate over residues 97 to 106 (PPLPPPPVLP). Low complexity predominate over residues 107-116 (GPGEELPGAR). The span at 117 to 128 (LPGGGGDDGAGR) shows a compositional bias: gly residues.

This is an uncharacterized protein from Homo sapiens (Human).